The primary structure comprises 565 residues: Hemagglutinin-neuraminidase (565 aa).

At 1-20 (MVAEDAPVRGTCRVLFRTTT) the chain is on the intravirion side. Residues 21–41 (LIFLCTLLALSISILYESLII) form a helical membrane-spanning segment. Over 42-565 (RKQIMSQAGS…VPFIRQVTLS (524 aa)) the chain is Virion surface. N-linked (GlcNAc...) asparagine; by host glycosylation is found at N110 and N139. Intrachain disulfides connect C161-C185, C175-C236, and C227-C240. Residues 223–228 (NRKSCS) are involved in neuraminidase activity. The N-linked (GlcNAc...) asparagine; by host glycan is linked to N267. 3 disulfide bridges follow: C333–C454, C365–C375, and C448–C458. N504 is a glycosylation site (N-linked (GlcNAc...) asparagine; by host). Cysteines 528 and 539 form a disulfide.

Belongs to the paramyxoviruses hemagglutinin-neuraminidase family. Homotetramer; composed of disulfide-linked homodimers. Interacts with F protein trimer.

It localises to the virion membrane. Its subcellular location is the host cell membrane. The enzyme catalyses Hydrolysis of alpha-(2-&gt;3)-, alpha-(2-&gt;6)-, alpha-(2-&gt;8)- glycosidic linkages of terminal sialic acid residues in oligosaccharides, glycoproteins, glycolipids, colominic acid and synthetic substrates.. In terms of biological role, attaches the virus to sialic acid-containing cell receptors and thereby initiating infection. Binding of HN protein to the receptor induces a conformational change that allows the F protein to trigger virion/cell membranes fusion. Its function is as follows. Neuraminidase activity ensures the efficient spread of the virus by dissociating the mature virions from the neuraminic acid containing glycoproteins. This Canis lupus familiaris (Dog) protein is Hemagglutinin-neuraminidase (HN).